A 531-amino-acid polypeptide reads, in one-letter code: Peptide chain release factor 3 (531 aa).

The tr-type G domain maps to S13–M282. GTP contacts are provided by residues S22 to T29, D90 to H94, and N144 to D147.

This sequence belongs to the TRAFAC class translation factor GTPase superfamily. Classic translation factor GTPase family. PrfC subfamily.

It localises to the cytoplasm. Its function is as follows. Increases the formation of ribosomal termination complexes and stimulates activities of RF-1 and RF-2. It binds guanine nucleotides and has strong preference for UGA stop codons. It may interact directly with the ribosome. The stimulation of RF-1 and RF-2 is significantly reduced by GTP and GDP, but not by GMP. This is Peptide chain release factor 3 from Vibrio cholerae serotype O1 (strain ATCC 39315 / El Tor Inaba N16961).